Consider the following 376-residue polypeptide: Queuine tRNA-ribosyltransferase accessory subunit 2 (376 aa).

Residues Cys323, Cys325, Cys328, and His354 each coordinate Zn(2+).

Belongs to the queuine tRNA-ribosyltransferase family. QTRT2 subfamily. In terms of assembly, heterodimer of a catalytic subunit and an accessory subunit. The cofactor is Zn(2+).

It localises to the cytoplasm. Its function is as follows. Non-catalytic subunit of the queuine tRNA-ribosyltransferase (TGT) that catalyzes the base-exchange of a guanine (G) residue with queuine (Q) at position 34 (anticodon wobble position) in tRNAs with GU(N) anticodons (tRNA-Asp, -Asn, -His and -Tyr), resulting in the hypermodified nucleoside queuosine (7-(((4,5-cis-dihydroxy-2-cyclopenten-1-yl)amino)methyl)-7-deazaguanosine). This chain is Queuine tRNA-ribosyltransferase accessory subunit 2, found in Caenorhabditis briggsae.